The chain runs to 529 residues: Peptide chain release factor 3 (529 aa).

The tr-type G domain occupies 11-280; that stretch reads NKRRTFAIIS…GLVKWAPAPM (270 aa). Residues 20-27, 88-92, and 142-145 contribute to the GTP site; these read SHPDAGKT, DTPGH, and NKLD.

Belongs to the TRAFAC class translation factor GTPase superfamily. Classic translation factor GTPase family. PrfC subfamily.

The protein localises to the cytoplasm. Its function is as follows. Increases the formation of ribosomal termination complexes and stimulates activities of RF-1 and RF-2. It binds guanine nucleotides and has strong preference for UGA stop codons. It may interact directly with the ribosome. The stimulation of RF-1 and RF-2 is significantly reduced by GTP and GDP, but not by GMP. This Proteus mirabilis (strain HI4320) protein is Peptide chain release factor 3.